The primary structure comprises 579 residues: UPF0324 membrane protein DVU_0943 (579 aa).

A run of 10 helical transmembrane segments spans residues 26–45 (YWAI…LFLA), 193–215 (AFNI…AIGM), 225–243 (FLVG…QMMG), 250–272 (YWGI…TVGT), 305–327 (IGIP…TFIF), 369–391 (LTLS…PAFI), 430–452 (AATI…AVYW), 473–495 (FPKF…GSLG), 515–533 (LRGW…ATNF), and 546–568 (LILY…YIMF).

This sequence belongs to the UPF0324 family.

The protein localises to the cell membrane. This chain is UPF0324 membrane protein DVU_0943, found in Nitratidesulfovibrio vulgaris (strain ATCC 29579 / DSM 644 / CCUG 34227 / NCIMB 8303 / VKM B-1760 / Hildenborough) (Desulfovibrio vulgaris).